A 108-amino-acid chain; its full sequence is UPF0102 protein Sama_3355 (108 aa).

This sequence belongs to the UPF0102 family.

The polypeptide is UPF0102 protein Sama_3355 (Shewanella amazonensis (strain ATCC BAA-1098 / SB2B)).